The primary structure comprises 86 residues: MKEGIHPNYREVLFHDVSNDFKFVTRSTIQTKDTIEHEGKTYPLAKIEVSSESHPFYTGTQKIMDTAGRVEKFRQKFGSKLGAAKK.

Belongs to the bacterial ribosomal protein bL31 family. Type B subfamily. Part of the 50S ribosomal subunit.

The sequence is that of Large ribosomal subunit protein bL31B from Cupriavidus metallidurans (strain ATCC 43123 / DSM 2839 / NBRC 102507 / CH34) (Ralstonia metallidurans).